The sequence spans 980 residues: Putative helicase 087L (980 aa).

A Helicase ATP-binding domain is found at 59 to 246 (INPHTLYDGV…IDLFNLILRT (188 aa)). Residue 72–79 (HEMGTGKT) participates in ATP binding. The DEAH box signature appears at 189–192 (DEAH). The Helicase C-terminal domain occupies 389 to 546 (RLSFVFSEFV…SIDLHMYEIA (158 aa)).

This sequence belongs to the IIV-6 022L family. SNF2/RAD54 helicase subfamily.

The chain is Putative helicase 087L from Invertebrate iridescent virus 3 (IIV-3).